A 443-amino-acid polypeptide reads, in one-letter code: Crh-like protein 2 (443 aa).

The signal sequence occupies residues 1–20; it reads MVRIGSSLLLATLAATTVSA. Positions 21–306 constitute a GH16 domain; that stretch reads ASDPPKCSQD…TVECYDPPSG (286 aa). A disulfide bond links cysteine 56 and cysteine 67. Glutamate 164 acts as the Nucleophile in catalysis. Glutamate 168 (proton donor) is an active-site residue. Glutamate 168 provides a ligand contact to chitin. Residues asparagine 194 and asparagine 237 are each glycosylated (N-linked (GlcNAc...) asparagine). Tryptophan 257 and threonine 268 together coordinate chitin. N-linked (GlcNAc...) asparagine glycosylation is found at asparagine 332 and asparagine 359. 2 stretches are compositionally biased toward low complexity: residues 350–367 and 378–410; these read ASSS…SANT and EPGN…SETS. A disordered region spans residues 350–420; it reads ASSSASGSAN…ASSNKNAAPS (71 aa). Residues 411-420 show a composition bias toward polar residues; that stretch reads ASSNKNAAPS. Residue asparagine 416 is the site of GPI-like-anchor amidated asparagine attachment. Residues 417-443 constitute a propeptide, removed in mature form; sequence AAPSQNERVLNGSFFAVLVAVVALVTL. N-linked (GlcNAc...) asparagine glycosylation is present at asparagine 427.

The protein belongs to the glycosyl hydrolase 16 family. CRH1 subfamily. In terms of processing, the GPI-like anchor contains a phosphoceramide lipid group. The anchor position has not been determined.

It localises to the cell membrane. The protein resides in the secreted. The protein localises to the cell wall. It carries out the reaction Random endo-hydrolysis of N-acetyl-beta-D-glucosaminide (1-&gt;4)-beta-linkages in chitin and chitodextrins.. Dual chitinase/transglycosylase that plays a role in cell wall architecture. Chitinase and transglycosylase activities are coupled. Required for the polysaccharide cross-linking at the septa and the cell wall. More specifically, transfers chitin to 1,6-beta-glucan in the cell wall. This is Crh-like protein 2 from Aspergillus fumigatus (strain ATCC MYA-4609 / CBS 101355 / FGSC A1100 / Af293) (Neosartorya fumigata).